The sequence spans 1165 residues: Chitin synthase 3 (1165 aa).

The Cytoplasmic segment spans residues 1 to 170 (MTGLNGDDPD…ETNDTLSFWQ (170 aa)). 2 disordered regions span residues 19–53 (DEES…NNPD) and 74–97 (PSST…GSVR). The segment covering 74–92 (PSSTGVNPNATRRSGSLRS) has biased composition (polar residues). A Glycyl lysine isopeptide (Lys-Gly) (interchain with G-Cter in ubiquitin) cross-link involves residue lysine 136. A helical transmembrane segment spans residues 171–191 (MYCYFITFWAPAPILAFCGMP). Residues 192-340 (KKERQMAWRE…PNFTVENYAG (149 aa)) lie on the Extracellular side of the membrane. Asparagine 303 and asparagine 332 each carry an N-linked (GlcNAc...) asparagine glycan. A helical membrane pass occupies residues 341 to 354 (WNCHTSKEDRDAFY). Topologically, residues 355 to 452 (GLKSKADVYF…SKTVGCIASD (98 aa)) are cytoplasmic. Residues 453–473 (VVLYVSLVFILSVVIIKFIIA) traverse the membrane as a helical segment. Residues 474 to 891 (CYFRWTVARK…EYYISHHQAK (418 aa)) are Extracellular-facing. Serine 537 carries the phosphoserine modification. Position 538 is a phosphothreonine (threonine 538). The helical transmembrane segment at 892 to 910 (AFESVFGSVTCLPGCFSMY) threads the bilayer. Topologically, residues 911–1029 (RIKSPKGSDG…SMQFVIGIEL (119 aa)) are cytoplasmic. Residues 1030–1050 (IGTMVLPLAICFTIYVIIFAI) form a helical membrane-spanning segment. The Extracellular portion of the chain corresponds to 1051-1055 (VSKPT). The chain crosses the membrane as a helical span at residues 1056 to 1076 (PVITLVLLAIILGLPGLIVVI). The Cytoplasmic portion of the chain corresponds to 1077–1165 (TATRWSYLWW…RKEESDSFVA (89 aa)).

Belongs to the chitin synthase family. Class IV subfamily. In terms of assembly, homodimer. May form higher order oligomers. Seems to interact with BNI4 and SKT5 which link CHS3 to septins. Glycosylated. Post-translationally, palmitoylated by PFA4; required for proper export from the ER.

Its subcellular location is the cell membrane. It localises to the bud neck. The protein resides in the cytoplasmic vesicle membrane. The catalysed reaction is [(1-&gt;4)-N-acetyl-beta-D-glucosaminyl](n) + UDP-N-acetyl-alpha-D-glucosamine = [(1-&gt;4)-N-acetyl-beta-D-glucosaminyl](n+1) + UDP + H(+). In terms of biological role, polymerizes chitin, a structural polymer of the cell wall and septum, by transferring the sugar moiety of UDP-GlcNAc to the non-reducing end of the growing chitin polymer. Appears to be responsible for synthesis of the majority of the chitin found in the cell wall periphery. It is involved in the synthesis of the chitin ring that forms in the cell wall just before bud emergence. This ring remains at the base of the bud as the bud grows and ultimately forms part of the bud scar marking the division site on the mother cell. Also catalyzes the synthesis of chitin laid down during mating and spore cell-wall synthesis. The polypeptide is Chitin synthase 3 (Saccharomyces cerevisiae (strain ATCC 204508 / S288c) (Baker's yeast)).